The following is a 90-amino-acid chain: Albumin-1 (90 aa).

A1 is a signal peptide. Cystine bridges form between C4–C21, C8–C23, and C16–C34. Residues 40–47 constitute a propeptide that is removed on maturation; it reads LSSVAKMI.

In terms of processing, the C-terminal glycine may be removed from A1b.

Its function is as follows. A1b binds to basic 7S globulin (BG) and stimulates its phosphorylation activity. The chain is Albumin-1 (LEG) from Phaseolus angularis (Azuki bean).